Reading from the N-terminus, the 208-residue chain is NAD(P)H-quinone oxidoreductase subunit M, chloroplastic (208 aa).

A chloroplast-targeting transit peptide spans 1-21 (MAATSSYTACTKFSMLGWIGG). A compositionally biased stretch (low complexity) spans 37-49 (QQAEVEESQQVNA). Residues 37–70 (QQAEVEESQQVNAQEEEQEKMKQQGKQKLPRPVE) are disordered.

It belongs to the NDH complex subunit M family. In terms of assembly, part of the chloroplast NDH complex, composed of a mixture of chloroplast and nucleus encoded subunits. Component of the NDH subcomplex A, at least composed of ndhH, ndhI, ndhJ, ndhK, ndhL, ndhM, ndhN and ndhO.

The protein resides in the plastid. It is found in the chloroplast thylakoid membrane. The enzyme catalyses a plastoquinone + NADH + (n+1) H(+)(in) = a plastoquinol + NAD(+) + n H(+)(out). The catalysed reaction is a plastoquinone + NADPH + (n+1) H(+)(in) = a plastoquinol + NADP(+) + n H(+)(out). Its function is as follows. NDH shuttles electrons from NAD(P)H:plastoquinone, via FMN and iron-sulfur (Fe-S) centers, to quinones in the photosynthetic chain and possibly in a chloroplast respiratory chain. The immediate electron acceptor for the enzyme in this species is believed to be plastoquinone. Couples the redox reaction to proton translocation, and thus conserves the redox energy in a proton gradient. The sequence is that of NAD(P)H-quinone oxidoreductase subunit M, chloroplastic from Vitis vinifera (Grape).